The primary structure comprises 302 residues: MLWRILTCCKSPEEDKDEHKKKPPNVGHAHLSVVSPLNELASEKSRSSLCIEWTIDSLRQFVQQLSVRQNMSKDRREALTYFINSYNDLFHDVYYGDGRSMSKTEEAQTIVTFTIGSYLYKYTHPSELFWQRLSDNMANIEDDGTCTEAQLAFRKRAALSKLGHPAFHFLPMNNKESFHYAWSLFTSTYFQKAATVSPSPNQQPVDSVANPQLRKASEITTISSRSDVDILLGKFKALIQESPDEHCNSWIQRIYITCVLPRNHYIYLLNEQVDFLTSIEIMKNQVTEGKLCLLNEDLGTLN.

In terms of biological role, has a role in meiosis. This Schizosaccharomyces pombe (strain 972 / ATCC 24843) (Fission yeast) protein is Meiotically up-regulated gene 129 protein (mug129).